The sequence spans 94 residues: Neurotoxin 213 (94 aa).

The N-terminal stretch at 1 to 22 (MLKFILTCTSVILFTAVEDSSC) is a signal peptide. Residues 24 to 88 (KGGNYPISVY…YWDYHRNNCK (65 aa)) enclose the LCN-type CS-alpha/beta domain. 3 disulfide bridges follow: Cys-39-Cys-62, Cys-48-Cys-67, and Cys-52-Cys-69.

The protein belongs to the long (3 C-C) scorpion toxin superfamily. Expressed by the venom gland.

Its subcellular location is the secreted. The protein is Neurotoxin 213 of Lychas mucronatus (Chinese swimming scorpion).